Reading from the N-terminus, the 265-residue chain is MSEPHLLIDAGNSRIKWALADARRSLVDTGAFGHTRDGGADPDWSHLPRPRGAWISNVAGADVAARLDALLDARWPGLPRTTIRARPVQCGVTNGYTTPEQLGSDRWAGLIGAHAAFPGEHLLIATFGTATTLEALRADGRFTGGLIAPGWALMMRALGTHTAQLPTLTTDIASGLLAGAQAEPFQIDTPRSLSAGCLYAQAGLIERAWRDLVAAWQAPVRLVLAGGAADDVARALTVAHTRHDALILSGLALIAADAAPATAQD.

9 to 16 serves as a coordination point for ATP; that stretch reads DAGNSRIK. Substrate contacts are provided by residues Y96 and 103–106; that span reads GSDR. Catalysis depends on D105, which acts as the Proton acceptor. Residue T129 participates in ATP binding. T189 serves as a coordination point for substrate.

Belongs to the type III pantothenate kinase family. In terms of assembly, homodimer. The cofactor is NH4(+). It depends on K(+) as a cofactor.

The protein resides in the cytoplasm. It catalyses the reaction (R)-pantothenate + ATP = (R)-4'-phosphopantothenate + ADP + H(+). Its pathway is cofactor biosynthesis; coenzyme A biosynthesis; CoA from (R)-pantothenate: step 1/5. In terms of biological role, catalyzes the phosphorylation of pantothenate (Pan), the first step in CoA biosynthesis. This Burkholderia orbicola (strain AU 1054) protein is Type III pantothenate kinase.